A 2145-amino-acid polypeptide reads, in one-letter code: MPVLKSDNFDPLEEAYEGGTIQNYNDEHHLHKSWANVIPDKRGLYDPDYEHDACGVGFVANKHGEQSHKIVTDARYLLVNMTHRGAVSSDGNGDGAGILLGIPHEFMKREFKLDLDLDIPEMGKYAVGNVFFKKNEKNNKKNLIKCQKIFEDLAASFNLSVLGWRNVPVDSTILGDVALSREPTILQPLLVPLYDEKQPEFNETKFRTQLYLLRKEASLQIGLENWFYVCSLNNTTIVYKGQLTPAQVYNYYPDLTNAHFKSHMALVHSRFSTNTFPSWDRAQPLRWLAHNGEINTLRGNKNWMRSREGVMNSATFKDELDKLYPIIEEGGSDSAALDNVLELLTINGTLSLPEAVMMMVPEAYHKDMDSDLKAWYDWAACLMEPWDGPALLTFTDGRYCGAILDRNGLRPCRYYITSDDRVICASEVGVIPIENSLVVQKGKLKPGDLFLVDTQLGEMVDTKKLKSQISKRQDFKSWLSKVIKLDDLLSKTANLVPKEFISQDSLSLKVQSDPRLLANGYTFEQVTFLLTPMALTGKEALGSMGNDAPLACLNENPVLLYDYFRQLFAQVTNPPIDPIREANVMSLECYVGPQGNLLEMHSSQCDRLLLKSPILHWNEFQALKNIEAAYPSWSVAEIDITFDKSEGLLGYTDTIDKITKLASEAIDDGKKILIITDRKMGANRVSISSLIAISCIHHHLIRNKQRSQVALILETGEAREIHHFCVLLGYGCDGVYPYLAMETLVRMNREGLLRNVNNDNDTLEEGQILENYKHAIDAGILKVMSKMGISTLASYKGAQIFEALGLDNSIVDLCFTGTSSRIRGVTFEYLAQDAFSLHERGYPSRQTISKSVNLPESGEYHFRDGGYKHVNEPTAIASLQDTVRNKNDVSWQLYVKKEMEAIRDCTLRGLLELDFENSVSIPLEQVEPWTEIARRFASGAMSYGSISMEAHSTLAIAMNRLGAKSNCGEGGEDAERSAVQENGDTMRSAIKQVASARFGVTSYYLSDADEIQIKIAQGAKPGEGGELPAHKVSKDIAKTRHSTPNVGLISPPPHHDIYSIEDLKQLIYDLKCANPRAGISVKLVSEVGVGIVASGVAKAKADHILVSGHDGGTGAARWTSVKYAGLPWELGLAETHQTLVLNDLRRNVVVQTDGQLRTGFDIAVAVLLGAESFTLATVPLIAMGCVMLRRCHLNSCAVGIATQDPYLRSKFKGQPEHVINFFYYLIQDLRQIMAKLGFRTIDEMVGHSEKLKKRDDVNAKAINIDLSPILTPAHVIRPGVPTKFTKKQDHKLHTRLDNKLIDEAEVTLDRGLPVNIDASIINTDRALGSTLSYRVSKKFGEDGLPKDTVVVNIEGSAGQSFGAFLASGITFILNGDANDYVGKGLSGGIIVIKPPKDSKFKSDENVIVGNTCFYGATSGTAFISGSAGERFGVRNSGATIVVERIKGNNAFEYMTGGRAIVLSQMESLNAFSGATGGIAYCLTSDYDDFVGKINKDTVELESLCDPVEIAFVKNLIQEHWNYTQSDLAARILGNFNHYLKDFVKVIPTDYKKVLLKEKAEAAKAKAKATSEYLKKFRSNQEVDDEVNTLLIANQKAKEQEKKKSITISNKATLKEPKVVDLEDAVPDSKQLEKNSERIEKTRGFMIHKRRHETHRDPRTRVNDWKEFTNPITKKDAKYQTARCMDCGTPFCLSDTGCPLSNIIPKFNELLFKNQWKLALDKLLETNNFPEFTGRVCPAPCEGACTLGIIEDPVGIKSVERIIIDNAFKEGWIKPCPPSTRTGFTVGVIGSGPAGLACADMLNRAGHTVTVYERSDRCGGLLMYGIPNMKLDKAIVQRRIDLLSAEGIDFVTNTEIGKTISMDELKNKHNAVVYAIGSTIPRDLPIKGRELKNIDFAMQLLESNTKALLNKDLEIIREKIQGKKVIVVGGGDTGNDCLGTSVRHGAASVLNFELLPEPPVERAKDNPWPQWPRVMRVDYGHAEVKEHYGRDPREYCILSKEFIGNDEGEVTAIRTVRVEWKKSQSGVWQMVEIPNSEEIFEADIILLSMGFVGPELINGNDNEVKKTRRGTIATLDDSSYSIDGGKTFACGDCRRGQSLIVWAIQEGRKCAASVDKFLMDGTTYLPSNGGIVQRDYKLLKELASQV.

Positions 1 to 53 (MPVLKSDNFDPLEEAYEGGTIQNYNDEHHLHKSWANVIPDKRGLYDPDYEHDA) are excised as a propeptide. The For GATase activity role is filled by C54. Residues 54–455 (CGVGFVANKH…PGDLFLVDTQ (402 aa)) form the Glutamine amidotransferase type-2 domain. Residue 1132–1189 (LAETHQTLVLNDLRRNVVVQTDGQLRTGFDIAVAVLLGAESFTLATVPLIAMGCVMLR) coordinates FMN. 3 residues coordinate [3Fe-4S] cluster: C1185, C1191, and C1196. A coiled-coil region spans residues 1551-1600 (KKVLLKEKAEAAKAKAKATSEYLKKFRSNQEVDDEVNTLLIANQKAKEQE). 1928–1942 (GGGDTGNDCLGTSVR) contacts NAD(+). Residue T2070 is modified to Phosphothreonine.

Belongs to the glutamate synthase family. As to quaternary structure, homotrimer. [3Fe-4S] cluster serves as cofactor. FAD is required as a cofactor. Requires FMN as cofactor.

The enzyme catalyses 2 L-glutamate + NAD(+) = L-glutamine + 2-oxoglutarate + NADH + H(+). It participates in amino-acid biosynthesis; L-glutamate biosynthesis via GLT pathway; L-glutamate from 2-oxoglutarate and L-glutamine (NAD(+) route): step 1/1. Its pathway is energy metabolism; nitrogen metabolism. Inhibited by homocysteine sulfonamide. Its function is as follows. Forms L-glutamate from L-glutamine and 2-oxoglutarate. Represents an alternative pathway to L-glutamate dehydrogenase for the biosynthesis of L-glutamate. Participates with glutamine synthetase in ammonia assimilation processes. The enzyme is specific for NADH, L-glutamine and 2-oxoglutarate. The protein is Glutamate synthase [NADH] (GLT1) of Saccharomyces cerevisiae (strain ATCC 204508 / S288c) (Baker's yeast).